Reading from the N-terminus, the 238-residue chain is NADH-quinone oxidoreductase subunit C (238 aa).

The span at 1–11 (MSTSNGSANGT) shows a compositional bias: polar residues. Positions 1-20 (MSTSNGSANGTNGVGLPRGD) are disordered.

This sequence belongs to the complex I 30 kDa subunit family. As to quaternary structure, NDH-1 is composed of 14 different subunits. Subunits NuoB, C, D, E, F, and G constitute the peripheral sector of the complex.

The protein resides in the cell membrane. The catalysed reaction is a quinone + NADH + 5 H(+)(in) = a quinol + NAD(+) + 4 H(+)(out). Its function is as follows. NDH-1 shuttles electrons from NADH, via FMN and iron-sulfur (Fe-S) centers, to quinones in the respiratory chain. The immediate electron acceptor for the enzyme in this species is believed to be a menaquinone. Couples the redox reaction to proton translocation (for every two electrons transferred, four hydrogen ions are translocated across the cytoplasmic membrane), and thus conserves the redox energy in a proton gradient. The polypeptide is NADH-quinone oxidoreductase subunit C (Mycolicibacterium smegmatis (strain ATCC 700084 / mc(2)155) (Mycobacterium smegmatis)).